A 160-amino-acid polypeptide reads, in one-letter code: SsrA-binding protein (160 aa).

Belongs to the SmpB family.

The protein resides in the cytoplasm. Its function is as follows. Required for rescue of stalled ribosomes mediated by trans-translation. Binds to transfer-messenger RNA (tmRNA), required for stable association of tmRNA with ribosomes. tmRNA and SmpB together mimic tRNA shape, replacing the anticodon stem-loop with SmpB. tmRNA is encoded by the ssrA gene; the 2 termini fold to resemble tRNA(Ala) and it encodes a 'tag peptide', a short internal open reading frame. During trans-translation Ala-aminoacylated tmRNA acts like a tRNA, entering the A-site of stalled ribosomes, displacing the stalled mRNA. The ribosome then switches to translate the ORF on the tmRNA; the nascent peptide is terminated with the 'tag peptide' encoded by the tmRNA and targeted for degradation. The ribosome is freed to recommence translation, which seems to be the essential function of trans-translation. This is SsrA-binding protein from Pectobacterium carotovorum subsp. carotovorum (strain PC1).